The chain runs to 505 residues: 6-phosphofructo-2-kinase/fructose-2,6-bisphosphatase 2 (505 aa).

The interval 1–20 is disordered; that stretch reads MSGASSSEQNNNSYETKTPN. At Ser-2 the chain carries N-acetylserine. The 6-phosphofructo-2-kinase stretch occupies residues 2 to 248; the sequence is SGASSSEQNN…VYYLMNIHVQ (247 aa). Position 29 is a phosphoserine; by PKA (Ser-29). Residue 45–53 coordinates ATP; it reads GLPARGKTY. Residues Arg-78 and Arg-102 each coordinate beta-D-fructose 6-phosphate. Residue Asp-128 is part of the active site. Beta-D-fructose 6-phosphate is bound by residues Thr-130 and Arg-136. Cys-158 is an active-site residue. 167 to 172 contributes to the ATP binding site; the sequence is NILEVK. Residues Lys-172, Arg-193, and Tyr-197 each coordinate beta-D-fructose 6-phosphate. Residues 249-505 are fructose-2,6-bisphosphatase; sequence PRTIYLCRHG…RAQDMQEGAD (257 aa). A beta-D-fructose 2,6-bisphosphate-binding site is contributed by Arg-256. His-257 (tele-phosphohistidine intermediate) is an active-site residue. The beta-D-fructose 2,6-bisphosphate site is built by Asn-263 and Gly-269. Catalysis depends on Glu-326, which acts as the Proton donor/acceptor. Residues Tyr-337, Arg-351, Lys-355, Tyr-366, Gln-392, and Arg-396 each contribute to the beta-D-fructose 2,6-bisphosphate site. Position 348-351 (348-351) interacts with ATP; that stretch reads FALR. Residues 392–396 and Tyr-428 contribute to the ATP site; that span reads QAVMR. The interval 445-505 is disordered; the sequence is HRDKPTNNFP…RAQDMQEGAD (61 aa). Residues 450–476 show a composition bias toward polar residues; it reads TNNFPKNQTPVRMRRNSFTPLSSSNTI. Ser-466 carries the post-translational modification Phosphoserine; by AMPK. 2 positions are modified to phosphothreonine: Thr-468 and Thr-475. At Ser-483 the chain carries Phosphoserine; by BRAF. Phosphoserine is present on residues Ser-486 and Ser-493.

The protein in the C-terminal section; belongs to the phosphoglycerate mutase family. As to quaternary structure, homodimer. Forms a heterodimer with PFKFB3. Post-translationally, phosphorylation by AMPK stimulates activity. In terms of tissue distribution, heart.

The catalysed reaction is beta-D-fructose 2,6-bisphosphate + H2O = beta-D-fructose 6-phosphate + phosphate. It carries out the reaction beta-D-fructose 6-phosphate + ATP = beta-D-fructose 2,6-bisphosphate + ADP + H(+). Phosphorylation results in the activation of the kinase activity. Functionally, synthesis and degradation of fructose 2,6-bisphosphate. The chain is 6-phosphofructo-2-kinase/fructose-2,6-bisphosphatase 2 from Homo sapiens (Human).